Consider the following 225-residue polypeptide: Glucosyl-3-phosphoglycerate phosphatase (225 aa).

Residue arginine 10 coordinates substrate. Catalysis depends on histidine 11, which acts as the Tele-phosphohistidine intermediate. Arginine 60 is a substrate binding site. The active-site Proton donor/acceptor is the glutamate 84. A substrate-binding site is contributed by histidine 158.

It belongs to the phosphoglycerate mutase family. As to quaternary structure, homodimer.

It carries out the reaction (2R)-2-O-(alpha-D-glucopyranosyl)-3-phospho-glycerate + H2O = (2R)-2-O-(alpha-D-glucopyranosyl)-glycerate + phosphate. In terms of biological role, involved in the biosynthesis of mycobacterial methylglucose lipopolysaccharides (MGLP). Catalyzes the dephosphorylation of glucosyl-3-phosphoglycerate (GPG) to glucosylglycerate. The protein is Glucosyl-3-phosphoglycerate phosphatase of Mycolicibacterium vanbaalenii (strain DSM 7251 / JCM 13017 / BCRC 16820 / KCTC 9966 / NRRL B-24157 / PYR-1) (Mycobacterium vanbaalenii).